A 304-amino-acid chain; its full sequence is Ribosomal RNA small subunit methyltransferase H (304 aa).

Residues 37-39 (GGH), Asp-57, Phe-79, Asp-100, and His-107 each bind S-adenosyl-L-methionine.

Belongs to the methyltransferase superfamily. RsmH family.

The protein localises to the cytoplasm. It carries out the reaction cytidine(1402) in 16S rRNA + S-adenosyl-L-methionine = N(4)-methylcytidine(1402) in 16S rRNA + S-adenosyl-L-homocysteine + H(+). Its function is as follows. Specifically methylates the N4 position of cytidine in position 1402 (C1402) of 16S rRNA. The polypeptide is Ribosomal RNA small subunit methyltransferase H (Bacteroides fragilis (strain ATCC 25285 / DSM 2151 / CCUG 4856 / JCM 11019 / LMG 10263 / NCTC 9343 / Onslow / VPI 2553 / EN-2)).